The sequence spans 506 residues: ATP synthase subunit alpha (506 aa).

170 to 177 (GDRQTGKT) serves as a coordination point for ATP.

This sequence belongs to the ATPase alpha/beta chains family. F-type ATPases have 2 components, CF(1) - the catalytic core - and CF(0) - the membrane proton channel. CF(1) has five subunits: alpha(3), beta(3), gamma(1), delta(1), epsilon(1). CF(0) has four main subunits: a(1), b(1), b'(1) and c(9-12).

The protein localises to the cellular thylakoid membrane. It carries out the reaction ATP + H2O + 4 H(+)(in) = ADP + phosphate + 5 H(+)(out). Functionally, produces ATP from ADP in the presence of a proton gradient across the membrane. The alpha chain is a regulatory subunit. In Synechococcus sp. (strain CC9605), this protein is ATP synthase subunit alpha.